Consider the following 531-residue polypeptide: MWFLRETIFGELVEYFSGGTRQVDVEKLGVCTDNSNVELSSCPDSSFDDEKTNQVNSEGLIIVTWDGEDDPENPKNWPLWAKLVVTFDVCFLTFAVYMGSAIFTPGIQEIRETMHVGTVPVILGLTLFVEGYAVGPLIFSPLSEVPQIGRQKIYVLSLIVFICLQIPTALGSSLGVLLPMRFLAGVFGSPALSTGGASLADIWQPWLYPYFMCFWSLGAVGGPVLGPLLGAAMVVAKSWRWQFWLLMMISALVLVIITFFMPETSEWHLLYKRAKRLRELTGNPNYKTEAEIASSQLSKGQFAKQILVRPIILCVSEPIVLSLTIYIGLVYSILYLWFEAFPILFTTVYHFTTIENGLVYMGILVGSVLTVAFYFIYLRKVMIPKFVENKGKFPAEEILIISFPAAFFIPISLFWFGWTGRESVHWIVPIVGTLFYASGSFLLFQSMFQYLAAAYPKYVASVFAGNALFRSSMAAASPLYARAMFNNTGPSYAPVGWGSTILGVISCIMIPIPFLIYKWGLKLRSRSKYAT.

The next 10 helical transmembrane spans lie at 83–103 (LVVTFDVCFLTFAVYMGSAIF), 119–139 (VPVILGLTLFVEGYAVGPLIF), 158–178 (LIVFICLQIPTALGSSLGVLL), 182–202 (FLAGVFGSPALSTGGASLADI), 214–234 (FWSLGAVGGPVLGPLLGAAMV), 241–261 (WQFWLLMMISALVLVIITFFM), 325–345 (IYIGLVYSILYLWFEAFPILF), 358–378 (LVYMGILVGSVLTVAFYFIYL), 398–418 (ILIISFPAAFFIPISLFWFGW), and 424–444 (VHWIVPIVGTLFYASGSFLLF). Asn486 carries an N-linked (GlcNAc...) asparagine glycan. Residues 496–516 (GWGSTILGVISCIMIPIPFLI) traverse the membrane as a helical segment.

Belongs to the major facilitator superfamily. CAR1 family.

The protein localises to the endoplasmic reticulum. The protein resides in the membrane. This is Transporter mfs1 (mfs1) from Schizosaccharomyces pombe (strain 972 / ATCC 24843) (Fission yeast).